A 77-amino-acid chain; its full sequence is Translation initiation factor IF-1, chloroplastic (77 aa).

The S1-like domain maps to 1–71 (MKEQKLIHEG…TKGRIIYRLR (71 aa)).

The protein belongs to the IF-1 family. In terms of assembly, component of the 30S ribosomal translation pre-initiation complex which assembles on the 30S ribosome in the order IF-2 and IF-3, IF-1 and N-formylmethionyl-tRNA(fMet); mRNA recruitment can occur at any time during PIC assembly.

It is found in the plastid. The protein localises to the chloroplast. In terms of biological role, one of the essential components for the initiation of protein synthesis. Stabilizes the binding of IF-2 and IF-3 on the 30S subunit to which N-formylmethionyl-tRNA(fMet) subsequently binds. Helps modulate mRNA selection, yielding the 30S pre-initiation complex (PIC). Upon addition of the 50S ribosomal subunit IF-1, IF-2 and IF-3 are released leaving the mature 70S translation initiation complex. The sequence is that of Translation initiation factor IF-1, chloroplastic from Dioscorea elephantipes (Elephant's foot yam).